The sequence spans 121 residues: MQKRIEIQNASLTEDALRLKCGEDLSGAERKASGQMLVDSDHFAFVYILESADSFEYVIIKEHIWPDLKEALDQRKPAVLEAGGKTVELSGLHEELDYLLENIKDNANYGDMEEKVKNVFL.

This sequence belongs to the UPF0738 family.

The polypeptide is UPF0738 protein RBAM_011600 (Bacillus velezensis (strain DSM 23117 / BGSC 10A6 / LMG 26770 / FZB42) (Bacillus amyloliquefaciens subsp. plantarum)).